The primary structure comprises 228 residues: Geranylgeranylglyceryl phosphate synthase (228 aa).

K11 provides a ligand contact to sn-glycerol 1-phosphate. Positions 13 and 39 each coordinate Mg(2+). Sn-glycerol 1-phosphate-binding positions include 159-164 (YIEYSG), G189, and 209-210 (GN).

This sequence belongs to the GGGP/HepGP synthase family. Group I subfamily. The cofactor is Mg(2+).

The protein localises to the cytoplasm. It catalyses the reaction sn-glycerol 1-phosphate + (2E,6E,10E)-geranylgeranyl diphosphate = sn-3-O-(geranylgeranyl)glycerol 1-phosphate + diphosphate. The protein operates within membrane lipid metabolism; glycerophospholipid metabolism. In terms of biological role, prenyltransferase that catalyzes the transfer of the geranylgeranyl moiety of geranylgeranyl diphosphate (GGPP) to the C3 hydroxyl of sn-glycerol-1-phosphate (G1P). This reaction is the first ether-bond-formation step in the biosynthesis of archaeal membrane lipids. This Methanoregula boonei (strain DSM 21154 / JCM 14090 / 6A8) protein is Geranylgeranylglyceryl phosphate synthase.